We begin with the raw amino-acid sequence, 143 residues long: MRKVDLCSVTEGTEVILATSSDEKHPPENIIDGNPETFWTTTGMFPQEFIICFHKHVKIEKLVIQSYLVRTLRIEKTTSKEPLDFEQWVEKDLVHTEGQLQNEEIVARDGYATFLRFIIVSAFDHFASVHSISAEGLTVSSLP.

3 residues coordinate Ca(2+): Asn-29, Asp-32, and Thr-37.

Belongs to the IFT25 family. In terms of assembly, component of the IFT complex B, at least composed of IFT20, IFT22, IFT25, IFT27, IFT46, IFT52, TRAF3IP1/IFT54, IFT57, IFT74, IFT80, IFT81, and IFT88. Interacts with IFT27. Interacts with IFT88. Expressed predominantly in the testis (at protein level).

Its subcellular location is the cell projection. It is found in the cilium. In terms of biological role, component of the IFT complex B required for sonic hedgehog/SHH signaling. May mediate transport of SHH components: required for the export of SMO and PTCH1 receptors out of the cilium and the accumulation of GLI2 at the ciliary tip in response to activation of the SHH pathway, suggesting it is involved in the dynamic transport of SHH signaling molecules within the cilium. Not required for ciliary assembly. Its role in intraflagellar transport is mainly seen in tissues rich in ciliated cells such as kidney and testis. Essential for male fertility, spermiogenesis and sperm flagella formation. Plays a role in the early development of the kidney. May be involved in the regulation of ureteric bud initiation. The sequence is that of Intraflagellar transport protein 25 homolog (Ift25) from Mus musculus (Mouse).